The primary structure comprises 179 residues: Cell division protein SepF (179 aa).

The tract at residues 18–55 (EDSSLPYEKRDEPVFTPVNSSQEPALPMNQPSQSAGTK) is disordered. Residues 34–55 (PVNSSQEPALPMNQPSQSAGTK) are compositionally biased toward polar residues.

It belongs to the SepF family. As to quaternary structure, homodimer. Interacts with FtsZ.

The protein resides in the cytoplasm. Cell division protein that is part of the divisome complex and is recruited early to the Z-ring. Probably stimulates Z-ring formation, perhaps through the cross-linking of FtsZ protofilaments. Its function overlaps with FtsA. The sequence is that of Cell division protein SepF from Streptococcus pneumoniae (strain ATCC 700669 / Spain 23F-1).